A 386-amino-acid chain; its full sequence is MPHSIPLLRPNPADPVPSYRLPHLIHTYSHLPTRAISHDDASMAYYSLAPIGCNLTEGFERRIEREDEEEHLDGLVESLEWLITRGRKGERKGGIITWRGMLTRLITMPYETRDPWEMTAIALDGSVYLELWDPPEEKAKRKREQSAWEKQGYMGYAYESFSTIPQEGRPGNGPEGWGGDVNTNVQWANVVRSAIGEIPLCIAGEVDCVKAEPGSPNPGLSGCMELKTNKVIQHPGHEAMFHKKLLKHWAQSWLLGIPEVVVGFRDDDGILRSQTTFDTAKIPYLVEVLNKPSWSPNRCLQSLHSVCSFLTKNVLPTDPLVTYPHIRGNRQAVKEAGELPPAVVWRLAFDPKKGCELHAVGEVGVVDGRWGGMLKEEYVRWRMGLE.

Arg34 contacts substrate. Glu159 serves as a coordination point for a divalent metal cation. Position 205 (Glu205) interacts with substrate. A divalent metal cation is bound by residues Asp207, Glu225, and Leu226. Substrate contacts are provided by Lys227 and Gln251.

The protein belongs to the DXO/Dom3Z family. In terms of assembly, interacts with RAT1; the interaction is direct, stabilizes RAT1 protein structure and stimulates its exoribonuclease activity. The interaction also stimulates RAI1 pyrophosphohydrolase activity, probably by recruiting it to mRNA substrates. The cofactor is a divalent metal cation.

Its subcellular location is the nucleus. The catalysed reaction is a 5'-end NAD(+)-phospho-ribonucleoside in mRNA + H2O = a 5'-end phospho-ribonucleoside in mRNA + NAD(+) + H(+). The enzyme catalyses a 5'-end (N(7)-methyl 5'-triphosphoguanosine)-ribonucleoside-ribonucleotide in mRNA + H2O = a (N(7)-methyl 5'-triphosphoguanosine)-nucleoside + a 5'-end phospho-ribonucleoside in mRNA + H(+). It catalyses the reaction a 5'-end triphospho-ribonucleoside in mRNA + H2O = a 5'-end phospho-ribonucleoside in mRNA + diphosphate + H(+). Decapping enzyme for NAD-capped RNAs: specifically hydrolyzes the nicotinamide adenine dinucleotide (NAD) cap from a subset of RNAs by removing the entire NAD moiety from the 5'-end of an NAD-capped RNA. The NAD-cap is present at the 5'-end of some RNAs and snoRNAs. In contrast to the canonical 5'-end N7 methylguanosine (m7G) cap, the NAD cap promotes mRNA decay. Also acts as a non-canonical decapping enzyme that removes the entire cap structure of m7G capped or incompletely capped RNAs. Has decapping activity toward incomplete 5'-end m7G cap mRNAs such as unmethylated 5'-end-capped RNA (cap0), while it has no activity toward 2'-O-ribose methylated m7G cap (cap1). Also possesses RNA 5'-pyrophosphohydrolase activity by hydrolyzing the 5'-end triphosphate to release pyrophosphates. Stimulates exoribonuclease activity of Rat1, allowing it to degrade RNAs with stable secondary structure more effectively. This Cryptococcus neoformans var. neoformans serotype D (strain B-3501A) (Filobasidiella neoformans) protein is Decapping nuclease RAI1 (RAI1).